The following is a 181-amino-acid chain: Oligoribonuclease (181 aa).

Positions L8–L171 constitute an Exonuclease domain. Y129 is an active-site residue.

Belongs to the oligoribonuclease family.

It is found in the cytoplasm. 3'-to-5' exoribonuclease specific for small oligoribonucleotides. This chain is Oligoribonuclease, found in Nitrosomonas eutropha (strain DSM 101675 / C91 / Nm57).